Here is a 541-residue protein sequence, read N- to C-terminus: MNAIVEQLKSTADATKATDIRAAFAADSQRFSRFSVSLDDLLMDFSKTAVNDDILKLLVKLAEEGGVEKKREEMFSGKAINFTEDRAVLHTALRNRSNAPVLVDGKDVMPDVNAVLAAMGKFADDVRSGTLKGATGKAITDVVNIGIGGSDLGPVMATLALAPFHDGPRAHFVSNIDGAHIADILKLVQPETTLFIVASKTFTTVETMTNAQTARNFIAKALGEAAVQHHFAAVSTALDKVAAFGIDSARVFGFWDWVGGRYSIWSAIGLPLMIAVGPENFGKFLDGAHAVDNHFRKAPITENLPILLGLIGFYHRNVLGYPTRAILPYDQRLSRFPAYLQQLDMESNGKGVTIDGTPVEGNSGPVVWGEPGTNGQHAFYQLIHQGTSIIPAEFMIAANAFEPELRHQHQLLISNVLAQSEALMKGRTFAEAKKQLTDKGMDDKKADFIAPHRVFTGNRPSITFVYDKLTPYALGRLIALYEHRVFVEGVLFRINSFDQWGVELGKELATGLLPVVEGKESAASHDSSTQGLVAALAKLAK.

Catalysis depends on glutamate 346, which acts as the Proton donor. Active-site residues include histidine 377 and lysine 506.

It belongs to the GPI family.

The protein localises to the cytoplasm. The enzyme catalyses alpha-D-glucose 6-phosphate = beta-D-fructose 6-phosphate. It functions in the pathway carbohydrate biosynthesis; gluconeogenesis. The protein operates within carbohydrate degradation; glycolysis; D-glyceraldehyde 3-phosphate and glycerone phosphate from D-glucose: step 2/4. In terms of biological role, catalyzes the reversible isomerization of glucose-6-phosphate to fructose-6-phosphate. The chain is Glucose-6-phosphate isomerase from Rhizobium johnstonii (strain DSM 114642 / LMG 32736 / 3841) (Rhizobium leguminosarum bv. viciae).